The primary structure comprises 116 residues: Protein Rev (116 aa).

Phosphoserine; by host CK2 occurs at positions 5 and 8. The segment at 18–26 (IIKHLYQSN) is homomultimerization. The segment at 20–48 (KHLYQSNPPPKPEGTRQARRNRRRRWRER) is disordered. Residues 34–50 (TRQARRNRRRRWRERQR) carry the Nuclear localization signal and RNA-binding (RRE) motif. The span at 36 to 48 (QARRNRRRRWRER) shows a compositional bias: basic residues. The Nuclear export signal and binding to XPO1 signature appears at 73–84 (LQLPPLERLTLD). The disordered stretch occupies residues 91–116 (TSGTQGVGSPQILVESPAVLESGTKE). A phosphoserine; by host mark is found at Ser92 and Ser99.

This sequence belongs to the HIV-1 REV protein family. In terms of assembly, homomultimer; when bound to the RRE. Multimeric assembly is essential for activity and may involve XPO1. Binds to human KPNB1, XPO1, TNPO1, RANBP5 and IPO7. Interacts with the viral Integrase. Interacts with human KHDRBS1. Interacts with human NAP1; this interaction decreases Rev multimerization and stimulates its activity. Interacts with human DEAD-box helicases DDX3 and DDX24; these interactions may serve for viral RNA export to the cytoplasm and packaging, respectively. Interacts with human PSIP1; this interaction may inhibit HIV-1 DNA integration by promoting dissociation of the Integrase-LEDGF/p75 complex. Post-translationally, asymmetrically arginine dimethylated at one site by host PRMT6. Methylation impairs the RNA-binding activity and export of viral RNA from the nucleus to the cytoplasm. In terms of processing, phosphorylated by protein kinase CK2. Presence of, and maybe binding to the N-terminus of the regulatory beta subunit of CK2 is necessary for CK2-mediated Rev's phosphorylation.

It localises to the host nucleus. The protein resides in the host nucleolus. It is found in the host cytoplasm. Functionally, escorts unspliced or incompletely spliced viral pre-mRNAs (late transcripts) out of the nucleus of infected cells. These pre-mRNAs carry a recognition sequence called Rev responsive element (RRE) located in the env gene, that is not present in fully spliced viral mRNAs (early transcripts). This function is essential since most viral proteins are translated from unspliced or partially spliced pre-mRNAs which cannot exit the nucleus by the pathway used by fully processed cellular mRNAs. Rev itself is translated from a fully spliced mRNA that readily exits the nucleus. Rev's nuclear localization signal (NLS) binds directly to KPNB1/Importin beta-1 without previous binding to KPNA1/Importin alpha-1. KPNB1 binds to the GDP bound form of RAN (Ran-GDP) and targets Rev to the nucleus. In the nucleus, the conversion from Ran-GDP to Ran-GTP dissociates Rev from KPNB1 and allows Rev's binding to the RRE in viral pre-mRNAs. Rev multimerization on the RRE via cooperative assembly exposes its nuclear export signal (NES) to the surface. Rev can then form a complex with XPO1/CRM1 and Ran-GTP, leading to nuclear export of the complex. Conversion from Ran-GTP to Ran-GDP mediates dissociation of the Rev/RRE/XPO1/RAN complex, so that Rev can return to the nucleus for a subsequent round of export. Beside KPNB1, also seems to interact with TNPO1/Transportin-1, RANBP5/IPO5 and IPO7/RANBP7 for nuclear import. The nucleoporin-like HRB/RIP is an essential cofactor that probably indirectly interacts with Rev to release HIV RNAs from the perinuclear region to the cytoplasm. This is Protein Rev from Human immunodeficiency virus type 1 group M subtype B (isolate CDC-451) (HIV-1).